The following is a 138-amino-acid chain: Succinate dehydrogenase assembly factor 4, mitochondrial (138 aa).

Residues 1-32 constitute a mitochondrion transit peptide; sequence MLCAIKSTGYRYPRTGALNLLRGRPFNMATRK. The segment covering 71-98 has biased composition (polar residues); the sequence is QATGDRTKESLNSPLLTKNDIGSFSPEF. A disordered region spans residues 71–138; that stretch reads QATGDRTKES…YSFNGRVTDF (68 aa).

It belongs to the SDHAF4 family. As to quaternary structure, interacts with SDH1 in its FAD-bound form.

Its subcellular location is the mitochondrion matrix. Its function is as follows. Plays an essential role in the assembly of succinate dehydrogenase (SDH), an enzyme complex (also referred to as respiratory complex II) that is a component of both the tricarboxylic acid (TCA) cycle and the mitochondrial electron transport chain, and which couples the oxidation of succinate to fumarate with the reduction of ubiquinone (coenzyme Q) to ubiquinol. Binds to the flavoprotein subunit SDH1 in its FAD-bound form, blocking the generation of excess reactive oxygen species (ROS) and facilitating its assembly with the iron-sulfur protein subunit SDH2 into the SDH catalytic dimer. This is Succinate dehydrogenase assembly factor 4, mitochondrial from Saccharomyces cerevisiae (strain ATCC 204508 / S288c) (Baker's yeast).